The chain runs to 234 residues: Probable transcriptional regulatory protein PSPPH_2212 (234 aa).

The protein belongs to the TACO1 family.

The protein resides in the cytoplasm. The sequence is that of Probable transcriptional regulatory protein PSPPH_2212 from Pseudomonas savastanoi pv. phaseolicola (strain 1448A / Race 6) (Pseudomonas syringae pv. phaseolicola (strain 1448A / Race 6)).